A 135-amino-acid chain; its full sequence is Small ribosomal subunit protein bS6 (135 aa).

Residues 99–135 (EKSAMLSHLDRNAHAGQDEERSRSPRRQRENAIERVE) are disordered.

It belongs to the bacterial ribosomal protein bS6 family.

Its function is as follows. Binds together with bS18 to 16S ribosomal RNA. The chain is Small ribosomal subunit protein bS6 from Bartonella tribocorum (strain CIP 105476 / IBS 506).